The primary structure comprises 102 residues: Small ribosomal subunit protein uS10 (102 aa).

It belongs to the universal ribosomal protein uS10 family. Part of the 30S ribosomal subunit.

Involved in the binding of tRNA to the ribosomes. The protein is Small ribosomal subunit protein uS10 of Listeria innocua serovar 6a (strain ATCC BAA-680 / CLIP 11262).